The chain runs to 171 residues: Endoribonuclease YbeY (171 aa).

3 residues coordinate Zn(2+): histidine 130, histidine 134, and histidine 140.

It belongs to the endoribonuclease YbeY family. Zn(2+) is required as a cofactor.

It localises to the cytoplasm. In terms of biological role, single strand-specific metallo-endoribonuclease involved in late-stage 70S ribosome quality control and in maturation of the 3' terminus of the 16S rRNA. This is Endoribonuclease YbeY from Neisseria meningitidis serogroup A / serotype 4A (strain DSM 15465 / Z2491).